The sequence spans 217 residues: ATP-dependent Clp protease proteolytic subunit (217 aa).

The active-site Nucleophile is the Ser-121. His-146 is a catalytic residue.

It belongs to the peptidase S14 family. Fourteen ClpP subunits assemble into 2 heptameric rings which stack back to back to give a disk-like structure with a central cavity, resembling the structure of eukaryotic proteasomes.

The protein localises to the cytoplasm. It catalyses the reaction Hydrolysis of proteins to small peptides in the presence of ATP and magnesium. alpha-casein is the usual test substrate. In the absence of ATP, only oligopeptides shorter than five residues are hydrolyzed (such as succinyl-Leu-Tyr-|-NHMec, and Leu-Tyr-Leu-|-Tyr-Trp, in which cleavage of the -Tyr-|-Leu- and -Tyr-|-Trp bonds also occurs).. Functionally, cleaves peptides in various proteins in a process that requires ATP hydrolysis. Has a chymotrypsin-like activity. Plays a major role in the degradation of misfolded proteins. The chain is ATP-dependent Clp protease proteolytic subunit from Burkholderia cenocepacia (strain HI2424).